A 133-amino-acid polypeptide reads, in one-letter code: Small ribosomal subunit protein uS12 (133 aa).

Aspartate 89 is modified (3-methylthioaspartic acid). Residues aspartate 103–lysine 133 form a disordered region. Over residues threonine 111–lysine 123 the composition is skewed to basic residues. A compositionally biased stretch (low complexity) spans proline 124 to lysine 133.

Belongs to the universal ribosomal protein uS12 family. Part of the 30S ribosomal subunit. Contacts proteins S8 and S17. May interact with IF1 in the 30S initiation complex.

Functionally, with S4 and S5 plays an important role in translational accuracy. Its function is as follows. Interacts with and stabilizes bases of the 16S rRNA that are involved in tRNA selection in the A site and with the mRNA backbone. Located at the interface of the 30S and 50S subunits, it traverses the body of the 30S subunit contacting proteins on the other side and probably holding the rRNA structure together. The combined cluster of proteins S8, S12 and S17 appears to hold together the shoulder and platform of the 30S subunit. This chain is Small ribosomal subunit protein uS12, found in Bacteroides thetaiotaomicron (strain ATCC 29148 / DSM 2079 / JCM 5827 / CCUG 10774 / NCTC 10582 / VPI-5482 / E50).